The chain runs to 209 residues: Ribosomal RNA large subunit methyltransferase E (209 aa).

Residues Gly-63, Trp-65, Asp-83, Asp-99, and Asp-124 each contribute to the S-adenosyl-L-methionine site. Lys-164 (proton acceptor) is an active-site residue. In terms of domain architecture, TRAM spans 191-209 (EASRGRSREVYIVATGYKG).

This sequence belongs to the class I-like SAM-binding methyltransferase superfamily. RNA methyltransferase RlmE family.

The protein localises to the cytoplasm. The catalysed reaction is uridine(2552) in 23S rRNA + S-adenosyl-L-methionine = 2'-O-methyluridine(2552) in 23S rRNA + S-adenosyl-L-homocysteine + H(+). Its function is as follows. Specifically methylates the uridine in position 2552 of 23S rRNA at the 2'-O position of the ribose in the fully assembled 50S ribosomal subunit. The chain is Ribosomal RNA large subunit methyltransferase E from Haemophilus influenzae (strain ATCC 51907 / DSM 11121 / KW20 / Rd).